The following is a 945-amino-acid chain: Isoleucine--tRNA ligase (945 aa).

Residues proline 66 to histidine 76 carry the 'HIGH' region motif. Glutamate 581 is an L-isoleucyl-5'-AMP binding site. A 'KMSKS' region motif is present at residues lysine 622–serine 626. Lysine 625 contacts ATP. Positions 908, 911, 928, and 931 each coordinate Zn(2+).

The protein belongs to the class-I aminoacyl-tRNA synthetase family. IleS type 1 subfamily. Monomer. The cofactor is Zn(2+).

It is found in the cytoplasm. The catalysed reaction is tRNA(Ile) + L-isoleucine + ATP = L-isoleucyl-tRNA(Ile) + AMP + diphosphate. Its function is as follows. Catalyzes the attachment of isoleucine to tRNA(Ile). As IleRS can inadvertently accommodate and process structurally similar amino acids such as valine, to avoid such errors it has two additional distinct tRNA(Ile)-dependent editing activities. One activity is designated as 'pretransfer' editing and involves the hydrolysis of activated Val-AMP. The other activity is designated 'posttransfer' editing and involves deacylation of mischarged Val-tRNA(Ile). This is Isoleucine--tRNA ligase from Paraburkholderia phymatum (strain DSM 17167 / CIP 108236 / LMG 21445 / STM815) (Burkholderia phymatum).